The following is a 220-amino-acid chain: GTP cyclohydrolase 1 (220 aa).

Residues C110, H113, and C181 each coordinate Zn(2+).

It belongs to the GTP cyclohydrolase I family. As to quaternary structure, toroid-shaped homodecamer, composed of two pentamers of five dimers.

It carries out the reaction GTP + H2O = 7,8-dihydroneopterin 3'-triphosphate + formate + H(+). The protein operates within cofactor biosynthesis; 7,8-dihydroneopterin triphosphate biosynthesis; 7,8-dihydroneopterin triphosphate from GTP: step 1/1. This chain is GTP cyclohydrolase 1, found in Baumannia cicadellinicola subsp. Homalodisca coagulata.